A 189-amino-acid chain; its full sequence is Stathmin-4 (189 aa).

2 S-palmitoyl cysteine lipidation sites follow: Cys-20 and Cys-22. Residues 48 to 189 (SDMEVIELNK…NKELKEEASR (142 aa)) enclose the SLD domain. Glu-54 and Ser-90 each carry phosphoserine. A coiled-coil region spans residues 90–189 (SLEEIQKKLE…NKELKEEASR (100 aa)). Residues 168–189 (QEKDKHAEEVRKNKELKEEASR) are disordered.

It belongs to the stathmin family. Nervous tissue.

It localises to the golgi apparatus. It is found in the cell projection. The protein localises to the growth cone. The protein resides in the axon. Functionally, exhibits microtubule-destabilizing activity. This Rattus norvegicus (Rat) protein is Stathmin-4 (Stmn4).